The primary structure comprises 197 residues: Nucleoid occlusion factor SlmA (197 aa).

The 61-residue stretch at 7–67 (INRREHILQC…GLIEFIEDAI (61 aa)) folds into the HTH tetR-type domain. Positions 30–49 (TTAKLAAEVGVSEAALYRHF) form a DNA-binding region, H-T-H motif. A coiled-coil region spans residues 110 to 130 (ALLGENERLRSRIDVLFAKIE).

It belongs to the nucleoid occlusion factor SlmA family. As to quaternary structure, homodimer. Interacts with FtsZ.

It localises to the cytoplasm. The protein resides in the nucleoid. Its function is as follows. Required for nucleoid occlusion (NO) phenomenon, which prevents Z-ring formation and cell division over the nucleoid. Acts as a DNA-associated cell division inhibitor that binds simultaneously chromosomal DNA and FtsZ, and disrupts the assembly of FtsZ polymers. SlmA-DNA-binding sequences (SBS) are dispersed on non-Ter regions of the chromosome, preventing FtsZ polymerization at these regions. This Shewanella frigidimarina (strain NCIMB 400) protein is Nucleoid occlusion factor SlmA.